The sequence spans 297 residues: Homoserine kinase (297 aa).

Residue 82 to 92 (PLTRGLGSSAS) participates in ATP binding.

The protein belongs to the GHMP kinase family. Homoserine kinase subfamily.

It is found in the cytoplasm. It carries out the reaction L-homoserine + ATP = O-phospho-L-homoserine + ADP + H(+). It functions in the pathway amino-acid biosynthesis; L-threonine biosynthesis; L-threonine from L-aspartate: step 4/5. In terms of biological role, catalyzes the ATP-dependent phosphorylation of L-homoserine to L-homoserine phosphate. This is Homoserine kinase from Bacillus cereus (strain AH187).